Consider the following 66-residue polypeptide: Large ribosomal subunit protein uL29 (66 aa).

Belongs to the universal ribosomal protein uL29 family.

In Kosmotoga olearia (strain ATCC BAA-1733 / DSM 21960 / TBF 19.5.1), this protein is Large ribosomal subunit protein uL29.